We begin with the raw amino-acid sequence, 596 residues long: Putative ankyrin repeat protein FPV024 (596 aa).

ANK repeat units follow at residues 5–34, 37–66, 68–96, 99–128, 130–158, 162–191, 195–225, 229–258, 262–291, 295–324, 326–355, 359–389, and 394–423; these read KLRK…TFSN, ALST…DINK, KSPP…DIEK, LGNS…DPNT, FINY…SLNI, HFKT…SLTI, YNNH…PVNE, LERT…DPNI, CLGT…NVNI, TIDT…NTRL, SRNP…EVNI, EGYT…NPNM, and NENT…DVHS.

This is Putative ankyrin repeat protein FPV024 from Fowlpox virus (strain NVSL) (FPV).